A 431-amino-acid chain; its full sequence is MTVKAEAARSTLTYSRMRGMVAILIAFMKQRRMGLNDFIQKIASNTYACKHAEVQSILKMSHPQEPELMNANPSPPPSPSQQINLGPSSNPHAKPSDFHFLKVIGKGSFGKVLLARHKAEEVFYAVKVLQKKAILKKKEEKHIMSERNVLLKNVKHPFLVGLHFSFQTADKLYFVLDYINGGELFYHLQRERCFLEPRARFYAAEIASALGYLHSLNIVYRDLKPENILLDSQGHIVLTDFGLCKENIEHNGTTSTFCGTPEYLAPEVLHKQPYDRTVDWWCLGAVLYEMLYGLPPFYSRNTAEMYDNILNKPLQLKPNITNSARHLLEGLLQKDRTKRLGAKDDFMEIKSHIFFSLINWDDLINKKITPPFNPNVSGPSDLRHFDPEFTEEPVPSSIGRSPDSILVTASVKEAAEAFLGFSYAPPVDSFL.

The tract at residues 1-60 (MTVKAEAARSTLTYSRMRGMVAILIAFMKQRRMGLNDFIQKIASNTYACKHAEVQSILKM) is necessary for localization to the mitochondria. The segment at 65–92 (EPELMNANPSPPPSPSQQINLGPSSNPH) is disordered. A Phosphoserine modification is found at Ser-74. Ser-78 carries the post-translational modification Phosphoserine; by MAPK7. Positions 81-91 (QQINLGPSSNP) are enriched in polar residues. The Protein kinase domain maps to 98-355 (FHFLKVIGKG…FMEIKSHIFF (258 aa)). ATP-binding positions include 104-112 (IGKGSFGKV) and Lys-127. The Nuclear localization signal motif lies at 131-141 (KKAILKKKEEK). The Proton acceptor role is filled by Asp-222. Residue Thr-256 is modified to Phosphothreonine; by PDPK1. The AGC-kinase C-terminal domain occupies 356-431 (SLINWDDLIN…SYAPPVDSFL (76 aa)). Thr-369 is subject to Phosphothreonine; by PKA. Residues Ser-397, Ser-401, and Ser-422 each carry the phosphoserine modification.

This sequence belongs to the protein kinase superfamily. AGC Ser/Thr protein kinase family. In terms of assembly, homodimer; disulfide-linked. Interacts with MAPK3/ERK1, MAPK1/ERK2, MAP2K1/MEK1, MAP2K2/MEK2, NEDD4, NEDD4L, MAPT/TAU, MAPK7, CREB1, SLC9A3R2/NHERF2 and KCNJ1/ROMK1. Forms a trimeric complex with FBXW7 and NOTCH1 Associates with the mammalian target of rapamycin complex 2 (mTORC2) via an interaction with MAPKAP1/SIN1. Regulated by phosphorylation. Activated by phosphorylation on Ser-422 by mTORC2, transforming it into a substrate for PDPK1 which phosphorylates it on Thr-256. Phosphorylation on Ser-397 and Ser-401 are also essential for its activity. Phosphorylation on Ser-78 by MAPK7 is required for growth factor-induced cell cycle progression. In terms of processing, ubiquitinated by NEDD4L; which promotes proteasomal degradation. Ubiquitinated by SYVN1 at the endoplasmic reticulum; which promotes rapid proteasomal degradation and maintains a high turnover rate in resting cells.

Its subcellular location is the cytoplasm. It localises to the nucleus. The protein localises to the endoplasmic reticulum membrane. The protein resides in the cell membrane. It is found in the mitochondrion. The catalysed reaction is L-seryl-[protein] + ATP = O-phospho-L-seryl-[protein] + ADP + H(+). It carries out the reaction L-threonyl-[protein] + ATP = O-phospho-L-threonyl-[protein] + ADP + H(+). Its activity is regulated as follows. Two specific sites, one in the kinase domain (Thr-256) and the other in the C-terminal regulatory region (Ser-422), need to be phosphorylated for its full activation. Phosphorylation at Ser-397 and Ser-401 are also essential for its activity. Activated by WNK1, WNK2, WNK3 and WNK4; which promote phosphorylation by mTORC2. Functionally, serine/threonine-protein kinase which is involved in the regulation of a wide variety of ion channels, membrane transporters, cellular enzymes, transcription factors, neuronal excitability, cell growth, proliferation, survival, migration and apoptosis. Plays an important role in cellular stress response. Contributes to regulation of renal Na(+) retention, renal K(+) elimination, salt appetite, gastric acid secretion, intestinal Na(+)/H(+) exchange and nutrient transport, insulin-dependent salt sensitivity of blood pressure, salt sensitivity of peripheral glucose uptake, cardiac repolarization and memory consolidation. Up-regulates Na(+) channels: SCNN1A/ENAC, SCN5A and ASIC1/ACCN2, K(+) channels: KCNJ1/ROMK1, KCNA1-5, KCNQ1-5 and KCNE1, epithelial Ca(2+) channels: TRPV5 and TRPV6, chloride channels: BSND, CLCN2 and CFTR, glutamate transporters: SLC1A3/EAAT1, SLC1A2 /EAAT2, SLC1A1/EAAT3, SLC1A6/EAAT4 and SLC1A7/EAAT5, amino acid transporters: SLC1A5/ASCT2, SLC38A1/SN1 and SLC6A19, creatine transporter: SLC6A8, Na(+)/dicarboxylate cotransporter: SLC13A2/NADC1, Na(+)-dependent phosphate cotransporter: SLC34A2/NAPI-2B, glutamate receptor: GRIK2/GLUR6. Up-regulates carriers: SLC9A3/NHE3, SLC12A1/NKCC2, SLC12A3/NCC, SLC5A3/SMIT, SLC2A1/GLUT1, SLC5A1/SGLT1 and SLC15A2/PEPT2. Regulates enzymes: GSK3A/B, PMM2 and Na(+)/K(+) ATPase, and transcription factors: CTNNB1 and nuclear factor NF-kappa-B. Stimulates sodium transport into epithelial cells by enhancing the stability and expression of SCNN1A/ENAC. This is achieved by phosphorylating the NEDD4L ubiquitin E3 ligase, promoting its interaction with 14-3-3 proteins, thereby preventing it from binding to SCNN1A/ENAC and targeting it for degradation. Regulates store-operated Ca(+2) entry (SOCE) by stimulating ORAI1 and STIM1. Regulates KCNJ1/ROMK1 directly via its phosphorylation or indirectly via increased interaction with SLC9A3R2/NHERF2. Phosphorylates MDM2 and activates MDM2-dependent ubiquitination of p53/TP53. Phosphorylates MAPT/TAU and mediates microtubule depolymerization and neurite formation in hippocampal neurons. Phosphorylates SLC2A4/GLUT4 and up-regulates its activity. Phosphorylates APBB1/FE65 and promotes its localization to the nucleus. Phosphorylates MAPK1/ERK2 and activates it by enhancing its interaction with MAP2K1/MEK1 and MAP2K2/MEK2. Phosphorylates FBXW7 and plays an inhibitory role in the NOTCH1 signaling. Phosphorylates FOXO1 resulting in its relocalization from the nucleus to the cytoplasm. Phosphorylates FOXO3, promoting its exit from the nucleus and interference with FOXO3-dependent transcription. Phosphorylates BRAF and MAP3K3/MEKK3 and inhibits their activity. Phosphorylates SLC9A3/NHE3 in response to dexamethasone, resulting in its activation and increased localization at the cell membrane. Phosphorylates CREB1. Necessary for vascular remodeling during angiogenesis. This chain is Serine/threonine-protein kinase Sgk1 (Sgk1), found in Mus musculus (Mouse).